The primary structure comprises 196 residues: Corrinoid adenosyltransferase CobA (196 aa).

36-42 serves as a coordination point for ATP; it reads GNGKGKT.

It belongs to the Cob(I)alamin adenosyltransferase family. Homodimer.

The protein resides in the cytoplasm. It catalyses the reaction 2 cob(II)yrinate a,c diamide + reduced [electron-transfer flavoprotein] + 2 ATP = 2 adenosylcob(III)yrinate a,c-diamide + 2 triphosphate + oxidized [electron-transfer flavoprotein] + 3 H(+). The catalysed reaction is 2 cob(II)alamin + reduced [electron-transfer flavoprotein] + 2 ATP = 2 adenosylcob(III)alamin + 2 triphosphate + oxidized [electron-transfer flavoprotein] + 3 H(+). It functions in the pathway cofactor biosynthesis; adenosylcobalamin biosynthesis; adenosylcobalamin from cob(II)yrinate a,c-diamide: step 2/7. Required for both de novo synthesis of the corrin ring for the assimilation of exogenous corrinoids. Participates in the adenosylation of a variety of incomplete and complete corrinoids. The chain is Corrinoid adenosyltransferase CobA (btuR) from Salmonella typhimurium (strain LT2 / SGSC1412 / ATCC 700720).